The chain runs to 109 residues: Thiosulfate sulfurtransferase GlpE (109 aa).

The region spanning 16–104 (REQGAVVVDI…WRTTYPAEIS (89 aa)) is the Rhodanese domain. The active-site Cysteine persulfide intermediate is the Cys64.

The protein belongs to the GlpE family.

The protein localises to the cytoplasm. It carries out the reaction thiosulfate + hydrogen cyanide = thiocyanate + sulfite + 2 H(+). The catalysed reaction is thiosulfate + [thioredoxin]-dithiol = [thioredoxin]-disulfide + hydrogen sulfide + sulfite + 2 H(+). Transferase that catalyzes the transfer of sulfur from thiosulfate to thiophilic acceptors such as cyanide or dithiols. May function in a CysM-independent thiosulfate assimilation pathway by catalyzing the conversion of thiosulfate to sulfite, which can then be used for L-cysteine biosynthesis. The protein is Thiosulfate sulfurtransferase GlpE of Pseudomonas fluorescens (strain SBW25).